A 359-amino-acid chain; its full sequence is Palmitoyltransferase PFA5 (359 aa).

Transmembrane regions (helical) follow at residues 10–30, 47–67, 164–184, and 206–226; these read WWYSLVPILCICIMCYGAIAY, AAAIGMTCLHLIIVILLWIIW, LFNQFLMCFLMHALIIFVSVV, and LVVLSLSCLVLLMVGALFISF. The 51-residue stretch at 120-170 folds into the DHHC domain; that stretch reads VWCSVCQSLKGLRTHHSVHLGFCVPRLDHYCVWLGTVIGRRNYRLFNQFLM.

The protein belongs to the DHHC palmitoyltransferase family. PFA5 subfamily. Post-translationally, autopalmitoylated.

The protein localises to the membrane. The catalysed reaction is L-cysteinyl-[protein] + hexadecanoyl-CoA = S-hexadecanoyl-L-cysteinyl-[protein] + CoA. The protein is Palmitoyltransferase PFA5 (PFA5) of Eremothecium gossypii (strain ATCC 10895 / CBS 109.51 / FGSC 9923 / NRRL Y-1056) (Yeast).